The following is a 476-amino-acid chain: Cytochrome P450 6B5 (476 aa).

Position 443 (Cys443) interacts with heme.

It belongs to the cytochrome P450 family. The cofactor is heme.

The protein localises to the endoplasmic reticulum membrane. The protein resides in the microsome membrane. It carries out the reaction an organic molecule + reduced [NADPH--hemoprotein reductase] + O2 = an alcohol + oxidized [NADPH--hemoprotein reductase] + H2O + H(+). Enables the insect to feed on furanocoumarin-producing plants and evolved as an adaptation for detoxification of xanthotoxin and other furanocoumarins. In Papilio glaucus (Eastern tiger swallowtail butterfly), this protein is Cytochrome P450 6B5 (CYP6B5).